A 721-amino-acid polypeptide reads, in one-letter code: Dipeptidyl-peptidase 5 (721 aa).

Positions 1–18 are cleaved as a signal peptide; sequence MGAFRWLSIAAAASTALA. Residues N75, N94, N151, and N254 are each glycosylated (N-linked (GlcNAc...) asparagine). The disordered stretch occupies residues 271 to 297; it reads ARPINGPDSPGTPKGIKGDSSSPVFSP. N-linked (GlcNAc...) asparagine glycosylation is found at N380 and N450. The active-site Charge relay system is the S560. An N-linked (GlcNAc...) asparagine glycan is attached at N607. Residues D643 and H675 each act as charge relay system in the active site.

This sequence belongs to the peptidase S9C family. N-glycosylated. As to expression, expressed in mycelia and conidia.

Its subcellular location is the secreted. Functionally, may be involved in metabolism of dipeptides or may affect host defense mechanisms. Has a substrate specificity limited to the hydrolysis of X-Ala, His-Ser, and Ser-Tyr dipeptides at a neutral pH optimum. The protein is Dipeptidyl-peptidase 5 of Aspergillus fumigatus (strain ATCC MYA-4609 / CBS 101355 / FGSC A1100 / Af293) (Neosartorya fumigata).